Here is a 249-residue protein sequence, read N- to C-terminus: MASCCPTSRGAAASNKSYTFKGKEIENFGGLTTYVVGSTSNTRVLIGFMDIFGLSDQIKEGADKLADDGFTVYLPDFLEGKPLPVTALPPKTPEDQKLCNDFFSTRISPNLHWPKLAKVVEAVRANHGPNVTIGTYGFCWGAKVLVTYPATIDFVGIASCHPSFPDSADAANVHCPVLFLCSKDEDAKIIKEWEEAFKTNPAYAKSSFETFSDMFHGWMAARADLSNPEQRKRFDEGYQKVSSFFQSLM.

It belongs to the AIM2 family.

It localises to the cytoplasm. It is found in the nucleus. This is an uncharacterized protein from Schizosaccharomyces pombe (strain 972 / ATCC 24843) (Fission yeast).